The chain runs to 657 residues: Chemoreceptor McpA (657 aa).

The Cytoplasmic portion of the chain corresponds to 1–5 (MKRIR). The helical transmembrane segment at 6 to 29 (LVDLPLIIKIGFAPAFALLMLAVM) threads the bilayer. Residues 30-188 (AGGAILVQKS…ESESAKRQAQ (159 aa)) lie on the Periplasmic side of the membrane. The helical transmembrane segment at 189 to 212 (ATAAMSVTIIMSLLTLGAVGALAF) threads the bilayer. Residues 213–657 (LTVMTTRKSI…APASDGWEEF (445 aa)) lie on the Cytoplasmic side of the membrane. HAMP domains lie at 216–269 (MTTR…HLEQ) and 297–349 (QEAS…ETMK). Residues 354–583 (STDGLSTGAD…QSTAATHSLK (230 aa)) enclose the Methyl-accepting transducer domain. Position 378 is a glutamate methyl ester (Gln) (glutamine 378). Glutamate 385 and glutamate 392 each carry glutamate methyl ester (Glu). Residue glutamine 574 is modified to Glutamate methyl ester (Gln). A disordered region spans residues 634 to 657 (ARPGRSSGSAALAQAPASDGWEEF).

It belongs to the methyl-accepting chemotaxis (MCP) protein family.

The protein resides in the cell membrane. In terms of biological role, chemotactic-signal transducers respond to changes in the concentration of attractants and repellents in the environment, transduce a signal from the outside to the inside of the cell, and facilitate sensory adaptation through the variation of the level of methylation. Attractants increase the level of methylation while repellents decrease the level of methylation. The sequence is that of Chemoreceptor McpA (mcpA) from Caulobacter vibrioides (strain ATCC 19089 / CIP 103742 / CB 15) (Caulobacter crescentus).